Consider the following 133-residue polypeptide: Small ribosomal subunit protein bS6 (133 aa).

Belongs to the bacterial ribosomal protein bS6 family.

Binds together with bS18 to 16S ribosomal RNA. This Borrelia turicatae (strain 91E135) protein is Small ribosomal subunit protein bS6.